The sequence spans 30 residues: Cycloviolacin-O2 (30 aa).

Residues 1–30 (GIPCGESCVWIPCISSAIGCSCKSKVCYRN) constitute a cross-link (cyclopeptide (Gly-Asn)). 3 disulfides stabilise this stretch: cysteine 4–cysteine 20, cysteine 8–cysteine 22, and cysteine 13–cysteine 27.

In terms of processing, this is a cyclic peptide.

Functionally, probably participates in a plant defense mechanism. The polypeptide is Cycloviolacin-O2 (Viola biflora (Yellow wood violet)).